The primary structure comprises 480 residues: Sestrin-2 (480 aa).

The residue at position 1 (M1) is an N-acetylmethionine. The tract at residues P20–S45 is disordered. The segment at G66–S239 is N-terminal domain; mediates the alkylhydroperoxide reductase activity. Catalysis depends on C125, which acts as the Cysteine sulfenic acid (-SOH) intermediate. K175 participates in a covalent cross-link: Glycyl lysine isopeptide (Lys-Gly) (interchain with G-Cter in ubiquitin). Disordered regions lie at residues A222 to F252 and L272 to K291. S249 carries the phosphoserine modification. Residues P308 to T480 form a C-terminal domain; mediates TORC1 regulation region. Residues T374 to T377, T386, and E451 each bind L-leucine.

Belongs to the sestrin family. In terms of assembly, interacts with the GATOR2 complex which is composed of MIOS, SEC13, SEH1L, WDR24 and WDR59; the interaction is negatively regulated by leucine. Conveys leucine availability via direct interaction with SEH1L and WDR24 components of the GATOR2 complex. Interacts with RRAGA, RRAGB, RRAGC and RRAGD; may function as a guanine nucleotide dissociation inhibitor for RRAGs and regulate them. May interact with the TORC2 complex. Interacts with KEAP1, RBX1, SQSTM and ULK1; to regulate the degradation of KEAP1. May also associate with the complex composed of TSC1, TSC2 and the AMP-responsive protein kinase/AMPK to regulate TORC1 signaling. May interact with PRDX1. Post-translationally, phosphorylated by ULK1 at multiple sites. In terms of processing, ubiquitinated at Lys-175 by RNF167 via 'Lys-63'-linked polyubiquitination in response to leucine deprivation: ubiquitination promotes SESN2-interaction with the GATOR2 complex, leading to inhibit the TORC1 signaling pathway. Deubiquitinated at Lys-175 by STAMBPL1, promoting the TORC1 signaling pathway. Ubiquitinated by RNF186; ubiquitination mediates proteasomal degradation. Widely expressed.

It localises to the cytoplasm. The catalysed reaction is a hydroperoxide + L-cysteinyl-[protein] = S-hydroxy-L-cysteinyl-[protein] + an alcohol. Functions as an intracellular leucine sensor that negatively regulates the mTORC1 signaling pathway through the GATOR complex. In absence of leucine, binds the GATOR subcomplex GATOR2 and prevents mTORC1 signaling. Binding of leucine to SESN2 disrupts its interaction with GATOR2 thereby activating the TORC1 signaling pathway. This stress-inducible metabolic regulator also plays a role in protection against oxidative and genotoxic stresses. May negatively regulate protein translation in response to endoplasmic reticulum stress, via mTORC1. May positively regulate the transcription by NFE2L2 of genes involved in the response to oxidative stress by facilitating the SQSTM1-mediated autophagic degradation of KEAP1. May also mediate TP53 inhibition of TORC1 signaling upon genotoxic stress. Moreover, may prevent the accumulation of reactive oxygen species (ROS) through the alkylhydroperoxide reductase activity born by the N-terminal domain of the protein. Was originally reported to contribute to oxidative stress resistance by reducing PRDX1. However, this could not be confirmed. The chain is Sestrin-2 from Homo sapiens (Human).